The chain runs to 322 residues: Fructose-1,6-bisphosphatase class 1 (322 aa).

Residues E84, D103, L105, and D106 each contribute to the Mg(2+) site. Substrate-binding positions include 106–109, N198, and K264; that span reads DGSS. A Mg(2+)-binding site is contributed by E270.

The protein belongs to the FBPase class 1 family. Homotetramer. Mg(2+) is required as a cofactor.

The protein resides in the cytoplasm. It carries out the reaction beta-D-fructose 1,6-bisphosphate + H2O = beta-D-fructose 6-phosphate + phosphate. Its pathway is carbohydrate biosynthesis; gluconeogenesis. In Colwellia psychrerythraea (strain 34H / ATCC BAA-681) (Vibrio psychroerythus), this protein is Fructose-1,6-bisphosphatase class 1.